The following is a 96-amino-acid chain: Putative pterin-4-alpha-carbinolamine dehydratase (96 aa).

This sequence belongs to the pterin-4-alpha-carbinolamine dehydratase family.

The enzyme catalyses (4aS,6R)-4a-hydroxy-L-erythro-5,6,7,8-tetrahydrobiopterin = (6R)-L-erythro-6,7-dihydrobiopterin + H2O. The chain is Putative pterin-4-alpha-carbinolamine dehydratase from Synechocystis sp. (strain ATCC 27184 / PCC 6803 / Kazusa).